A 554-amino-acid polypeptide reads, in one-letter code: 3-(3-hydroxy-phenyl)propionate/3-hydroxycinnamic acid hydroxylase (554 aa).

Residues 17–46 (QVAI…VVEK) and 285–295 (FRIDRVLLAGD) contribute to the FAD site.

It belongs to the PheA/TfdB FAD monooxygenase family. FAD serves as cofactor.

The catalysed reaction is 3-(3-hydroxyphenyl)propanoate + NADH + O2 + H(+) = 3-(2,3-dihydroxyphenyl)propanoate + NAD(+) + H2O. It carries out the reaction (2E)-3-(3-hydroxyphenyl)prop-2-enoate + NADH + O2 + H(+) = (2E)-3-(2,3-dihydroxyphenyl)prop-2-enoate + NAD(+) + H2O. Its pathway is aromatic compound metabolism; 3-phenylpropanoate degradation. Functionally, catalyzes the insertion of one atom of molecular oxygen into position 2 of the phenyl ring of 3-(3-hydroxyphenyl)propionate (3-HPP) and hydroxycinnamic acid (3HCI). This chain is 3-(3-hydroxy-phenyl)propionate/3-hydroxycinnamic acid hydroxylase, found in Escherichia coli (strain K12 / DH10B).